Reading from the N-terminus, the 227-residue chain is uncharacterized protein (227 aa).

This is an uncharacterized protein from Ictalurid herpesvirus 1 (strain Auburn) (IcHV-1).